Here is a 33-residue protein sequence, read N- to C-terminus: Cytochrome b6-f complex subunit 8 (33 aa).

A helical transmembrane segment spans residues 2-22 (LFTFAWASLAAIFTFSIAMVV).

It belongs to the PetN family. As to quaternary structure, the 4 large subunits of the cytochrome b6-f complex are cytochrome b6, subunit IV (17 kDa polypeptide, PetD), cytochrome f and the Rieske protein, while the 4 small subunits are PetG, PetL, PetM and PetN. The complex functions as a dimer.

The protein localises to the cellular thylakoid membrane. Functionally, component of the cytochrome b6-f complex, which mediates electron transfer between photosystem II (PSII) and photosystem I (PSI), cyclic electron flow around PSI, and state transitions. The chain is Cytochrome b6-f complex subunit 8 from Prochlorococcus marinus (strain SARG / CCMP1375 / SS120).